Here is a 537-residue protein sequence, read N- to C-terminus: Prolyl 4-hydroxylase subunit alpha-2 (537 aa).

An N-terminal signal peptide occupies residues 1 to 23 (MKLQVLVLVLLMSWFGVLSWVQA). The N-linked (GlcNAc...) asparagine glycan is linked to Asn-117. Residues 209–242 (SLVLDYLSYAVFQLGDLHRAVELTRRLLSLDPSH) form a TPR repeat. The N-linked (GlcNAc...) asparagine glycan is linked to Asn-266. Residues 414 to 522 (TAELLQVANY…KWVSNKWFHE (109 aa)) enclose the Fe2OG dioxygenase domain. Fe cation is bound by residues His-432 and Asp-434. Lys-482 carries the N6-succinyllysine modification. Position 503 (His-503) interacts with Fe cation. Lys-513 contributes to the 2-oxoglutarate binding site.

The protein belongs to the P4HA family. Heterotetramer of two alpha-2 chains and two beta chains (P4HB) (the beta chain is the multi-functional PDI), where P4HB plays the role of a structural subunit; this tetramer catalyzes the formation of 4-hydroxyproline in collagen. It depends on Fe(2+) as a cofactor. The cofactor is L-ascorbate. Expressed at least in brain, heart and lung.

The protein localises to the endoplasmic reticulum lumen. The catalysed reaction is L-prolyl-[collagen] + 2-oxoglutarate + O2 = trans-4-hydroxy-L-prolyl-[collagen] + succinate + CO2. Inhibited by poly(L-proline) only at very high concentrations. Its function is as follows. Catalyzes the post-translational formation of 4-hydroxyproline in -Xaa-Pro-Gly- sequences in collagens and other proteins. This Mus musculus (Mouse) protein is Prolyl 4-hydroxylase subunit alpha-2 (P4ha2).